The following is a 193-amino-acid chain: Fibrillarin-like rRNA/tRNA 2'-O-methyltransferase (193 aa).

S-adenosyl-L-methionine is bound by residues Thr-82 to Thr-83, Glu-100 to Phe-101, Asp-125 to Ala-126, and Asp-145 to Gln-148.

Belongs to the methyltransferase superfamily. Fibrillarin family. In terms of assembly, interacts with nop5. Component of box C/D small ribonucleoprotein (sRNP) particles that contain rpl7ae, FlpA and nop5, plus a guide RNA.

Its function is as follows. Involved in pre-rRNA and tRNA processing. Utilizes the methyl donor S-adenosyl-L-methionine to catalyze the site-specific 2'-hydroxyl methylation of ribose moieties in rRNA and tRNA. Site specificity is provided by a guide RNA that base pairs with the substrate. Methylation occurs at a characteristic distance from the sequence involved in base pairing with the guide RNA. In Methanosarcina mazei (Methanosarcina frisia), this protein is Fibrillarin-like rRNA/tRNA 2'-O-methyltransferase.